The sequence spans 459 residues: Exodeoxyribonuclease 7 large subunit (459 aa).

It belongs to the XseA family. In terms of assembly, heterooligomer composed of large and small subunits.

Its subcellular location is the cytoplasm. It catalyses the reaction Exonucleolytic cleavage in either 5'- to 3'- or 3'- to 5'-direction to yield nucleoside 5'-phosphates.. Functionally, bidirectionally degrades single-stranded DNA into large acid-insoluble oligonucleotides, which are then degraded further into small acid-soluble oligonucleotides. The protein is Exodeoxyribonuclease 7 large subunit of Yersinia pseudotuberculosis serotype O:3 (strain YPIII).